The sequence spans 108 residues: Immunoglobulin kappa variable 11-125 (108 aa).

Positions 1–23 (DVQMIQSPSSLSASLGDIVTMTC) are framework-1. The cysteines at positions 23 and 88 are disulfide-linked. A complementarity-determining-1 region spans residues 24–34 (QASQGTSINLN). A framework-2 region spans residues 35–49 (WFQQKPGKAPKLLIY). Positions 50–56 (GASILED) are complementarity-determining-2. The segment at 57 to 88 (GVPSRFSGSRYGTDFTLTISSLEDEDMATYFC) is framework-3. Residues 89–97 (LQHSYLPYT) form a complementarity-determining-3 region. The interval 98–108 (FGGGTKLEIKR) is framework-4.

This Mus musculus (Mouse) protein is Immunoglobulin kappa variable 11-125.